The sequence spans 281 residues: Nucleoid occlusion protein (281 aa).

A disordered region spans residues 1–26 (MKHPFSRLFSFGEKEQEEAGGKQERE). The span at 12 to 26 (GEKEQEEAGGKQERE) shows a compositional bias: basic and acidic residues. Positions 145–164 (EALAQRLGKGQSTIANKLRL) form a DNA-binding region, H-T-H motif.

The protein belongs to the ParB family.

The protein resides in the cytoplasm. It localises to the nucleoid. In terms of biological role, effects nucleoid occlusion by binding relatively nonspecifically to DNA and preventing the assembly of the division machinery in the vicinity of the nucleoid, especially under conditions that disturb the cell cycle. It helps to coordinate cell division and chromosome segregation by preventing the formation of the Z ring through the nucleoid, which would cause chromosome breakage. The protein is Nucleoid occlusion protein of Geobacillus thermodenitrificans (strain NG80-2).